The sequence spans 572 residues: Receptor-transporting protein 5 (572 aa).

The 3CxxC-type zinc finger occupies 52 to 148 (SRLQCGHCPG…AYEGCCEACE (97 aa)). Residues 544–560 (FWIWVSMTVCVFWLMCM) form a helical membrane-spanning segment.

Its subcellular location is the membrane. The protein is Receptor-transporting protein 5 (RTP5) of Homo sapiens (Human).